The chain runs to 87 residues: Large ribosomal subunit protein bL31B (87 aa).

Belongs to the bacterial ribosomal protein bL31 family. Type B subfamily. As to quaternary structure, part of the 50S ribosomal subunit.

The protein is Large ribosomal subunit protein bL31B of Salinispora arenicola (strain CNS-205).